A 48-amino-acid chain; its full sequence is Delta-actitoxin-Bcg1c (48 aa).

Cystine bridges form between Cys-4-Cys-45, Cys-6-Cys-35, and Cys-28-Cys-46.

It is found in the secreted. The protein resides in the nematocyst. Functionally, binds specifically to voltage-gated sodium channels SCN1A/Nav1.1, thereby delaying their inactivation during signal transduction. The sequence is that of Delta-actitoxin-Bcg1c from Bunodosoma cangicum (Sea anemone).